Reading from the N-terminus, the 338-residue chain is Glycerol-3-phosphate dehydrogenase [NAD(P)+] (338 aa).

Residues Ser15, Tyr16, His36, and Lys110 each contribute to the NADPH site. Sn-glycerol 3-phosphate contacts are provided by Lys110, Gly139, and Thr141. Ala143 lines the NADPH pocket. Positions 195, 248, 258, 259, and 260 each coordinate sn-glycerol 3-phosphate. The active-site Proton acceptor is Lys195. An NADPH-binding site is contributed by Arg259. Positions 283 and 285 each coordinate NADPH.

This sequence belongs to the NAD-dependent glycerol-3-phosphate dehydrogenase family.

The protein localises to the cytoplasm. It catalyses the reaction sn-glycerol 3-phosphate + NAD(+) = dihydroxyacetone phosphate + NADH + H(+). The catalysed reaction is sn-glycerol 3-phosphate + NADP(+) = dihydroxyacetone phosphate + NADPH + H(+). Its pathway is membrane lipid metabolism; glycerophospholipid metabolism. Functionally, catalyzes the reduction of the glycolytic intermediate dihydroxyacetone phosphate (DHAP) to sn-glycerol 3-phosphate (G3P), the key precursor for phospholipid synthesis. The sequence is that of Glycerol-3-phosphate dehydrogenase [NAD(P)+] from Edwardsiella ictaluri (strain 93-146).